A 275-amino-acid polypeptide reads, in one-letter code: MAIVKVKPTSPGRRAMVKVVNKDLHKGKPHAALLDTQSSKAGRNNNGRITTRHQGGGHKQHYRVIDFRRTKDGIPAKVERLEYDPNRSANIALVLYADGERRYIIAPKGVTVGQQLMSGSEAPIRAGNTLPIRNIPVGTTIHCIEMLPGKGAQMARSAGTSAMLLAREGLYAQVRLRSGEIRRVHIECRATIGEVGNEEHSLRQIGKAGANRWRGIRPTVRGVAMNPIDHPHGGGEGRTAAGRDPVSPWGTPTKGFRTRRNKRTTTMIVQRRHKR.

Positions serine 38–histidine 53 are enriched in polar residues. Disordered stretches follow at residues serine 38–glutamine 60 and alanine 224–arginine 257.

It belongs to the universal ribosomal protein uL2 family. As to quaternary structure, part of the 50S ribosomal subunit. Forms a bridge to the 30S subunit in the 70S ribosome.

Functionally, one of the primary rRNA binding proteins. Required for association of the 30S and 50S subunits to form the 70S ribosome, for tRNA binding and peptide bond formation. It has been suggested to have peptidyltransferase activity; this is somewhat controversial. Makes several contacts with the 16S rRNA in the 70S ribosome. The sequence is that of Large ribosomal subunit protein uL2 from Burkholderia pseudomallei (strain 1106a).